The following is a 208-amino-acid chain: Protein-L-isoaspartate O-methyltransferase (208 aa).

Residue serine 59 is part of the active site.

The protein belongs to the methyltransferase superfamily. L-isoaspartyl/D-aspartyl protein methyltransferase family.

It localises to the cytoplasm. The enzyme catalyses [protein]-L-isoaspartate + S-adenosyl-L-methionine = [protein]-L-isoaspartate alpha-methyl ester + S-adenosyl-L-homocysteine. In terms of biological role, catalyzes the methyl esterification of L-isoaspartyl residues in peptides and proteins that result from spontaneous decomposition of normal L-aspartyl and L-asparaginyl residues. It plays a role in the repair and/or degradation of damaged proteins. This Cronobacter sakazakii (strain ATCC BAA-894) (Enterobacter sakazakii) protein is Protein-L-isoaspartate O-methyltransferase.